Reading from the N-terminus, the 384-residue chain is 8-amino-7-oxononanoate synthase (384 aa).

Arg23 serves as a coordination point for substrate. Residue 110–111 coordinates pyridoxal 5'-phosphate; that stretch reads GF. His135 is a substrate binding site. 3 residues coordinate pyridoxal 5'-phosphate: Ser179, His206, and Thr232. Lys235 is modified (N6-(pyridoxal phosphate)lysine). Thr348 contributes to the substrate binding site.

The protein belongs to the class-II pyridoxal-phosphate-dependent aminotransferase family. BioF subfamily. As to quaternary structure, homodimer. Pyridoxal 5'-phosphate serves as cofactor.

The catalysed reaction is 6-carboxyhexanoyl-[ACP] + L-alanine + H(+) = (8S)-8-amino-7-oxononanoate + holo-[ACP] + CO2. It functions in the pathway cofactor biosynthesis; biotin biosynthesis. Catalyzes the decarboxylative condensation of pimeloyl-[acyl-carrier protein] and L-alanine to produce 8-amino-7-oxononanoate (AON), [acyl-carrier protein], and carbon dioxide. The sequence is that of 8-amino-7-oxononanoate synthase from Vibrio cholerae serotype O1 (strain ATCC 39315 / El Tor Inaba N16961).